We begin with the raw amino-acid sequence, 362 residues long: 3-dehydroquinate synthase (362 aa).

NAD(+) is bound by residues 71-76, 105-109, 129-130, Lys-142, Lys-151, and 169-172; these read DGEQYK, GVVGD, TT, and CLKT. Glu-184, His-247, and His-264 together coordinate Zn(2+).

This sequence belongs to the sugar phosphate cyclases superfamily. Dehydroquinate synthase family. It depends on NAD(+) as a cofactor. Co(2+) is required as a cofactor. Requires Zn(2+) as cofactor.

The protein localises to the cytoplasm. It catalyses the reaction 7-phospho-2-dehydro-3-deoxy-D-arabino-heptonate = 3-dehydroquinate + phosphate. The protein operates within metabolic intermediate biosynthesis; chorismate biosynthesis; chorismate from D-erythrose 4-phosphate and phosphoenolpyruvate: step 2/7. Catalyzes the conversion of 3-deoxy-D-arabino-heptulosonate 7-phosphate (DAHP) to dehydroquinate (DHQ). This Escherichia coli O157:H7 protein is 3-dehydroquinate synthase.